We begin with the raw amino-acid sequence, 175 residues long: Adenine phosphoribosyltransferase (175 aa).

The protein belongs to the purine/pyrimidine phosphoribosyltransferase family. As to quaternary structure, homodimer.

The protein localises to the cytoplasm. The enzyme catalyses AMP + diphosphate = 5-phospho-alpha-D-ribose 1-diphosphate + adenine. Its pathway is purine metabolism; AMP biosynthesis via salvage pathway; AMP from adenine: step 1/1. Its function is as follows. Catalyzes a salvage reaction resulting in the formation of AMP, that is energically less costly than de novo synthesis. The chain is Adenine phosphoribosyltransferase from Francisella tularensis subsp. tularensis (strain WY96-3418).